Here is a 633-residue protein sequence, read N- to C-terminus: CDK5 and ABL1 enzyme substrate 1 (633 aa).

Low complexity predominate over residues 1–29; that stretch reads MAAAAAAATTAACSSGSAGTDAAGASGLQ. Residues 1–99 form a disordered region; that stretch reads MAAAAAAATT…EGGAAKPGAG (99 aa). Residues 1-109 form an interaction with TDRD7 region; that stretch reads MAAAAAAATT…GACGARTRFS (109 aa). Basic and acidic residues predominate over residues 51–61; it reads PPRKPRMDPRR. Phosphoserine is present on residues S168 and S287. The segment at 179–492 is interaction with CDK3; the sequence is QWQPPRPAPL…TTVIDYVKPS (314 aa). S313 is modified (phosphoserine; by CDK2 and CDK3). At T415 the chain carries Phosphothreonine.

The protein belongs to the cyclin family. Found in a complex with p53/TP53. Found in a number of complexes with CDK2, CDK3, CDK5, ABL1, TDRD7, CDK17, CCNA1, CCNE1 and TP73. Interacts with CDK2, CDK3, CDK5, ABL1 and TDRD7. Post-translationally, phosphorylated on Ser-313 by CCNE1/CDK3. Phosphorylated on serine/threonine residues by CDK5 and on tyrosine residues by ABL1. Also phosphorylated in vitro by CCNA1/CDK2, CCNE1/CDK2, CCNA1/CDK3 and CCNE1/CDK3. As to expression, expressed in breast, pancreas, colon, head and neck (at protein level). Strongly decreased in more than half of cases of atypical endometrial hyperplasia and in more than 90% of endometrial cancers.

It localises to the nucleus. The protein resides in the cytoplasm. Its function is as follows. Cyclin-dependent kinase binding protein. Enhances cyclin-dependent kinase tyrosine phosphorylation by nonreceptor tyrosine kinases, such as that of CDK5 by activated ABL1, which leads to increased CDK5 activity and is critical for neuronal development, and that of CDK2 by WEE1, which leads to decreased CDK2 activity and growth inhibition. Positively affects neuronal outgrowth. Plays a role as a regulator for p53/p73-induced cell death. This Homo sapiens (Human) protein is CDK5 and ABL1 enzyme substrate 1 (CABLES1).